The following is a 475-amino-acid chain: Glutamate--tRNA ligase 1 (475 aa).

Positions 11 to 21 match the 'HIGH' region motif; it reads PSPTGYLHIGG. Positions 240–244 match the 'KMSKS' region motif; sequence KLSKR. Lys-243 is a binding site for ATP.

Belongs to the class-I aminoacyl-tRNA synthetase family. Glutamate--tRNA ligase type 1 subfamily. As to quaternary structure, monomer.

Its subcellular location is the cytoplasm. It catalyses the reaction tRNA(Glu) + L-glutamate + ATP = L-glutamyl-tRNA(Glu) + AMP + diphosphate. Functionally, catalyzes the attachment of glutamate to tRNA(Glu) in a two-step reaction: glutamate is first activated by ATP to form Glu-AMP and then transferred to the acceptor end of tRNA(Glu). The protein is Glutamate--tRNA ligase 1 of Methylobacterium radiotolerans (strain ATCC 27329 / DSM 1819 / JCM 2831 / NBRC 15690 / NCIMB 10815 / 0-1).